Reading from the N-terminus, the 163-residue chain is Ribonuclease H (163 aa).

Residues 4 to 146 (SPKKVLIYTD…CDRLAVRASQ (143 aa)) enclose the RNase H type-1 domain. 4 residues coordinate Mg(2+): Asp-13, Glu-51, Asp-73, and Asp-138.

This sequence belongs to the RNase H family. As to quaternary structure, monomer. The cofactor is Mg(2+).

It localises to the cytoplasm. The catalysed reaction is Endonucleolytic cleavage to 5'-phosphomonoester.. Functionally, endonuclease that specifically degrades the RNA of RNA-DNA hybrids. The polypeptide is Ribonuclease H (Rippkaea orientalis (strain PCC 8801 / RF-1) (Cyanothece sp. (strain PCC 8801))).